Here is a 505-residue protein sequence, read N- to C-terminus: RNA-splicing ligase RtcB homolog (505 aa).

Residues Asp119, Cys122, His227, His259, and His353 each contribute to the Mn(2+) site. 226–230 lines the GMP pocket; sequence NHYGE. GMP contacts are provided by residues 353-354, 402-405, Ser409, 428-431, and Lys504; these read HN, GGTM, and HGAG. His428 (GMP-histidine intermediate) is an active-site residue.

Belongs to the RtcB family. Catalytic component of the tRNA-splicing ligase complex. The cofactor is Mn(2+).

It catalyses the reaction a 3'-end 3'-phospho-ribonucleotide-RNA + a 5'-end dephospho-ribonucleoside-RNA + GTP = a ribonucleotidyl-ribonucleotide-RNA + GMP + diphosphate. The catalysed reaction is a 3'-end 2',3'-cyclophospho-ribonucleotide-RNA + a 5'-end dephospho-ribonucleoside-RNA + GTP + H2O = a ribonucleotidyl-ribonucleotide-RNA + GMP + diphosphate + H(+). Functionally, catalytic subunit of the tRNA-splicing ligase complex that acts by directly joining spliced tRNA halves to mature-sized tRNAs by incorporating the precursor-derived splice junction phosphate into the mature tRNA as a canonical 3',5'-phosphodiester. May act as an RNA ligase with broad substrate specificity, and may function toward other RNAs. In Brugia malayi (Filarial nematode worm), this protein is RNA-splicing ligase RtcB homolog.